An 819-amino-acid chain; its full sequence is Molybdenum cofactor sulfurase (819 aa).

N6-(pyridoxal phosphate)lysine is present on Lys271. Residue Cys430 is part of the active site. The region spanning 650–817 (CKLLRYSSST…IGVGEEVNPD (168 aa)) is the MOSC domain.

The protein belongs to the class-V pyridoxal-phosphate-dependent aminotransferase family. MOCOS subfamily. Pyridoxal 5'-phosphate serves as cofactor. Ubiquitously expressed.

It carries out the reaction Mo-molybdopterin + L-cysteine + AH2 = thio-Mo-molybdopterin + L-alanine + A + H2O. It functions in the pathway cofactor biosynthesis; molybdopterin biosynthesis. Functionally, sulfurates the molybdenum cofactor. Sulfation of molybdenum is essential for xanthine dehydrogenase (XDH) and aldehyde oxidase (ADO) enzymes in which molybdenum cofactor is liganded by 1 oxygen and 1 sulfur atom in active form. Modulates cold stress- and osmotic stress-responsive gene expression by acting as key regulator of abscisic acid (ABA) biosynthesis. This is Molybdenum cofactor sulfurase (ABA3) from Arabidopsis thaliana (Mouse-ear cress).